Here is a 308-residue protein sequence, read N- to C-terminus: uncharacterized protein (308 aa).

Residues 1 to 18 (MKIILLFLAALASFTVHA) form the signal peptide.

This is an uncharacterized protein from Escherichia coli (strain K12).